A 257-amino-acid polypeptide reads, in one-letter code: MKNKSKLLACCLMALPISSFSIGNNNLIGVGVSAGNSIYQVKKKTAVEPFLMLDLSFGNFYMRGAAGLSELGYQHVFTPSFSTSLFLSPFDGAPIKRKDLKPGYDSIQDRKTQVAVGLGLDYDLSDLFNLPNTNISLEMKKGRRGFNSDITLTRTFMLTDKLSISPSFGLSYYSAKYTNYYFGIKKAELNKTKLKSVYHPKKAYSGHIALNSHYAITDHIGMGLSFSWETYSKAIKKSPIVKRSGEISSALNFYYMF.

The N-terminal stretch at 1–21 is a signal peptide; sequence MKNKSKLLACCLMALPISSFS.

This sequence belongs to the MipA/OmpV family.

It is found in the cell outer membrane. In Pasteurella multocida (strain Pm70), this protein is 24 kDa outer membrane protein.